Consider the following 220-residue polypeptide: Antistasin (220 aa).

The first 19 residues, 1–19 (MNYLFVFLALSAAVTFANA), serve as a signal peptide directing secretion. Antistasin-like domains lie at 21–46 (CNKI…ICKC), 54–79 (CSNR…ICRC), 91–117 (CDGL…KCEC), 120–145 (CKQF…TCKC), 154–180 (CDDL…KCEC), and 183–208 (CKNF…TCKC).

This sequence belongs to the protease inhibitor I15 (antistasin) family. As to expression, gland cells. It is more strongly expressed in the head than in the gastric tissue.

The protein resides in the secreted. Functionally, this highly disulfide-bonded protein is a potent inhibitor of factor Xa. Facilitates digestion of tissues and may also protect the gastric tissues from its own digestive enzymes. May have therapeutic utility as an anticoagulant. Also exhibits a strong metastatic activity. The sequence is that of Antistasin from Hydra vulgaris (Hydra).